We begin with the raw amino-acid sequence, 266 residues long: Serine/arginine-rich splicing factor 12 (266 aa).

A disordered region spans residues 42 to 266 (ARPRRPRAPR…SRSYHHKNSW (225 aa)). Over residues 43-62 (RPRRPRAPRPRLRLRGRPGR) the composition is skewed to basic residues. Over residues 102–114 (KSKERHLCSPSDH) the composition is skewed to basic and acidic residues. Positions 115-127 (RRSRSPSQRRSRS) are enriched in basic residues. Basic and acidic residues predominate over residues 133–144 (GRDRRHSDSLKE). Positions 151–166 (SYSQSKSRSKSLPRQS) are enriched in low complexity. Positions 183–194 (GRSRSKSLPKRS) are enriched in basic residues. Polar residues-rich tracts occupy residues 202–212 (SRSPQKQTGSG) and 235–244 (AYTSSGSKTQ). The span at 245–266 (TTKHSHLRSHSRSRSYHHKNSW) shows a compositional bias: basic residues.

It belongs to the splicing factor SR family.

It localises to the nucleus. In terms of biological role, splicing factor that seems to antagonize SR proteins in pre-mRNA splicing regulation. The polypeptide is Serine/arginine-rich splicing factor 12 (Srsf12) (Mus musculus (Mouse)).